A 427-amino-acid polypeptide reads, in one-letter code: Enolase (427 aa).

A (2R)-2-phosphoglycerate-binding site is contributed by Gln-163. Residue Glu-205 is the Proton donor of the active site. Mg(2+) is bound by residues Asp-242, Glu-285, and Asp-312. 4 residues coordinate (2R)-2-phosphoglycerate: Lys-337, Arg-366, Ser-367, and Lys-388. Catalysis depends on Lys-337, which acts as the Proton acceptor.

This sequence belongs to the enolase family. Mg(2+) serves as cofactor.

It localises to the cytoplasm. It is found in the secreted. Its subcellular location is the cell surface. The enzyme catalyses (2R)-2-phosphoglycerate = phosphoenolpyruvate + H2O. The protein operates within carbohydrate degradation; glycolysis; pyruvate from D-glyceraldehyde 3-phosphate: step 4/5. In terms of biological role, catalyzes the reversible conversion of 2-phosphoglycerate (2-PG) into phosphoenolpyruvate (PEP). It is essential for the degradation of carbohydrates via glycolysis. The chain is Enolase from Dechloromonas aromatica (strain RCB).